Consider the following 301-residue polypeptide: F-box protein At4g02733 (301 aa).

An F-box domain is found at 91-146 (NSISWFLPSELTVKVFSMVDTKSLMQASACCTMFNNCAMDPLCYFHIDLTKAFKHV).

The sequence is that of F-box protein At4g02733 from Arabidopsis thaliana (Mouse-ear cress).